A 191-amino-acid chain; its full sequence is Fe/S biogenesis protein NfuA (191 aa).

2 residues coordinate [4Fe-4S] cluster: Cys-149 and Cys-152.

Belongs to the NfuA family. As to quaternary structure, homodimer. The cofactor is [4Fe-4S] cluster.

Its function is as follows. Involved in iron-sulfur cluster biogenesis. Binds a 4Fe-4S cluster, can transfer this cluster to apoproteins, and thereby intervenes in the maturation of Fe/S proteins. Could also act as a scaffold/chaperone for damaged Fe/S proteins. This Erwinia tasmaniensis (strain DSM 17950 / CFBP 7177 / CIP 109463 / NCPPB 4357 / Et1/99) protein is Fe/S biogenesis protein NfuA.